Here is a 2898-residue protein sequence, read N- to C-terminus: Papilin (2898 aa).

Positions 1–26 (MDLSRRLCSTALVAFIVLASIHDSQS) are cleaved as a signal peptide. The tract at residues 43–67 (LPESSVTPGGEGNDPDEWTPWSSPS) is disordered. The TSP type-1 1 domain maps to 57 to 111 (PDEWTPWSSPSDCSRTCGGGVSYQTRECLRRDDRGEAVCSGGSRRYFSCNTQDCP). 3 disulfide bridges follow: Cys69–Cys105, Cys73–Cys110, and Cys84–Cys95. 2 N-linked (GlcNAc...) asparagine glycosylation sites follow: Asn258 and Asn319. Residues 338–397 (DTHTWTHHQFNACSASCGGGSQSRKVTCNNRITLAEVNPSLCDQKSKPVEEQACGTEPCA) form the TSP type-1 2 domain. Asn419 is a glycosylation site (N-linked (GlcNAc...) asparagine). TSP type-1 domains follow at residues 461–521 (NCPK…TPCE), 522–575 (GVDW…KSPK), 576–633 (CEAQ…QDCE), and 639–694 (CPGE…EACT). 3 disulfide bridges follow: Cys462–Cys504, Cys473–Cys515, and Cys477–Cys520. Residue Asn669 is glycosylated (N-linked (GlcNAc...) asparagine). 2 disordered regions span residues 699-1252 (LPLT…CAKS) and 1323-1367 (GEND…PDTK). Acidic residues-rich tracts occupy residues 708 to 720 (IEDDEEDCDEDGI) and 727 to 738 (LSDDEKSEDVID). Residues 768–788 (STGTTFEGSGYDSESTTDSGI) show a composition bias toward polar residues. Low complexity predominate over residues 801–879 (EASTDLSSST…ASASESTDVS (79 aa)). Residues Asn889, Asn914, Asn917, Asn950, and Asn1064 are each glycosylated (N-linked (GlcNAc...) asparagine). Residues 890–1053 (ASDSTPESST…SDNTDITTDG (164 aa)) are compositionally biased toward low complexity. Over residues 1064 to 1073 (NASTEGSTEG) the composition is skewed to polar residues. 2 stretches are compositionally biased toward low complexity: residues 1076-1091 (EDTTISTESSGSTEST) and 1104-1215 (STVE…IWST). A compositionally biased stretch (basic residues) spans 1237 to 1248 (SKPRKCKPKKST). Low complexity predominate over residues 1330–1351 (PETTTVPPTTTTEETQPETTTE). N-linked (GlcNAc...) asparagine glycans are attached at residues Asn1489 and Asn1623. Cystine bridges form between Cys1612–Cys1662, Cys1621–Cys1645, Cys1637–Cys1658, Cys1671–Cys1721, Cys1680–Cys1704, Cys1696–Cys1717, Cys1730–Cys1780, Cys1739–Cys1763, Cys1755–Cys1776, Cys1790–Cys1840, Cys1799–Cys1823, Cys1815–Cys1836, Cys1849–Cys1899, Cys1858–Cys1882, and Cys1874–Cys1895. 5 BPTI/Kunitz inhibitor domains span residues 1612 to 1662 (CGLP…KDTC), 1671 to 1721 (CLLP…QGTC), 1730 to 1780 (CEQP…NYNC), 1790 to 1840 (CALP…EDHC), and 1849 to 1899 (CEIP…LARC). N-linked (GlcNAc...) asparagine glycosylation is present at Asn1750. A disordered region spans residues 1902–1928 (KPEPTTTTPATRPQPSRQDVCDEEPAP). Positions 1905 to 1916 (PTTTTPATRPQP) are enriched in low complexity. Intrachain disulfides connect Cys1922–Cys1972, Cys1931–Cys1955, and Cys1947–Cys1968. A BPTI/Kunitz inhibitor 6 domain is found at 1922 to 1972 (CDEEPAPGECSTWVLKWHFDRKIGACRQFYYGNCGGNGNRFETENDCQQRC). The disordered stretch occupies residues 1972 to 2004 (CLSQEPPAPTPPRAPAPTRQPDPAPTVAQCSQP). Residues 1977-1995 (PPAPTPPRAPAPTRQPDPA) show a composition bias toward pro residues. Disulfide bonds link Cys2001-Cys2051, Cys2010-Cys2034, Cys2026-Cys2047, Cys2071-Cys2121, Cys2080-Cys2104, Cys2096-Cys2117, Cys2128-Cys2178, Cys2137-Cys2161, Cys2153-Cys2174, Cys2194-Cys2244, Cys2203-Cys2227, Cys2219-Cys2240, Cys2253-Cys2303, Cys2262-Cys2286, Cys2278-Cys2299, Cys2318-Cys2371, Cys2327-Cys2354, and Cys2346-Cys2367. BPTI/Kunitz inhibitor domains follow at residues 2001–2051 (CSQP…SARC), 2071–2121 (CFLA…QNEC), 2128–2178 (CALP…LNFC), 2194–2244 (CAEP…ERQC), 2253–2303 (CNEP…QTVC), and 2318–2371 (CLLP…TNQC). Residue Asn2020 is glycosylated (N-linked (GlcNAc...) asparagine). The N-linked (GlcNAc...) asparagine glycan is linked to Asn2083. An N-linked (GlcNAc...) asparagine glycan is attached at Asn2205. One can recognise a WAP domain in the interval 2452–2498 (DIYKPGECPALSANASGCARECYTDADCRGDNKCCSDGCGQLCVHPA). 3 N-linked (GlcNAc...) asparagine glycosylation sites follow: Asn2465, Asn2552, and Asn2625. Ig-like C2-type domains are found at residues 2523 to 2607 (PKEA…REVA), 2617 to 2697 (PAYI…RPVS), and 2749 to 2840 (PTVN…ANVS). A disulfide bridge connects residues Cys2543 and Cys2592. 2 cysteine pairs are disulfide-bonded: Cys2640–Cys2687 and Cys2775–Cys2824. N-linked (GlcNAc...) asparagine glycosylation is found at Asn2784 and Asn2838. One can recognise a PLAC domain in the interval 2847-2886 (VSPECVDNPYFANCKLIVKGRYCSNPYYTQFCCRSCTLAG).

It belongs to the papilin family. As to quaternary structure, homooligomer; disulfide-linked. N-glycosylated. Post-translationally, sulfated. In terms of tissue distribution, during embryogenesis it first appears in the extracellular matrix during gastrulation and early mesoderm development at sites where basement membranes do not subsequently form. Later, migrating hemocytes prominently produce it together with other ECM components, in basement membranes that underlie epithelia and envelop muscles and emerging organs. At various life stages, it can be synthesized by other cells, such as those of the fat body, and it also occurs in a few, circumscribed regions of relatively amorphous ECM. Isoform E is specifically expressed in ECM of heart and proventriculus. Isoform C is a major component of transitory ECM deposit in the early embryo. Isoform F is a major component of the basement membrane during embryogenesis.

It localises to the secreted. The protein localises to the extracellular space. The protein resides in the extracellular matrix. It is found in the basement membrane. Essential extracellular matrix (ECM) protein that influences cell rearrangements. May act by modulating metalloproteinases action during organogenesis. Able to non-competitively inhibit procollagen N-proteinase, an ADAMTS metalloproteinase. This chain is Papilin (Ppn), found in Drosophila melanogaster (Fruit fly).